The following is a 1659-amino-acid chain: eIF-2-alpha kinase GCN2 (1659 aa).

The RWD domain maps to 17-128 (NELEAIRSIY…SFTQEKLDEF (112 aa)). Residues 149 to 170 (KEQLEKEEREKQQETIKKRSDE) form a disordered region. 2 consecutive Protein kinase domains span residues 256–527 (LVKP…MKFL) and 599–981 (FEEI…SGWL). ATP is bound by residues 605-613 (LGQGAFGQV) and K628. Disordered stretches follow at residues 671–691 (NVFE…DFEE) and 727–768 (FENS…VPRR). S761 is modified (phosphoserine). D835 (proton acceptor) is an active-site residue. T882 and T887 each carry phosphothreonine; by autocatalysis. Residues 999–1519 (NPSSPWQQQV…EFKRWDENSS (521 aa)) are histidyl-tRNA synthetase-like.

The protein belongs to the protein kinase superfamily. Ser/Thr protein kinase family. GCN2 subfamily. As to quaternary structure, homodimer; homodimerization is important for kinase activation by uncharged tRNAs. Interacts (via N-terminal RWD domain) with GCN1 (via N- and C-terminus); this interaction stimulates GCN2 kinase activity in a GCN20-dependent manner in response to amino acid starvation. Interacts (via N-terminus) with the GCN1-GCN20 complex on translating ribosomes in amino acid-starved cells; GCN1 may bind near the ribosomal A-site and promotes the transfer of uncharged tRNAs from the A-site to the tRNA-binding domain in GCN2 for its subsequent kinase activation, and hence allowing GCN4 translational activation and derepression of amino acid biosynthetic genes. Interacts (via C-terminus) with TIF11; this interaction is direct, occurs in amino acid-repleted cells, may be stabilized in a ribosome-dependent manner, reduces GCN2-mediated eIF-2-alpha phosphorylation but not GCN2 autophosphorylation and is lost in amino acid-starved cells and by uncharged tRNAs. Associates (via C-terminus) with ribosomes. Requires Mg(2+) as cofactor. In terms of processing, autophosphorylated, autophosphorylation on Thr-882 and Thr-887 increases kinase activity.

The protein localises to the cytoplasm. The catalysed reaction is L-seryl-[protein] + ATP = O-phospho-L-seryl-[protein] + ADP + H(+). The enzyme catalyses L-threonyl-[protein] + ATP = O-phospho-L-threonyl-[protein] + ADP + H(+). With respect to regulation, the integrated stress response (ISR) is activated in response to conditions that promote ribosome collisions: GCN1, which acts as a ribosome collision sensor, activates GCN2. The RQC pathway and the integrated stress response (ISR) antagonize each other: HEL2 prevents the activation of GCN2, while GCN2 suppresses RQC activation. Ribosome stalling-induced integrated stress response prefers ribosomes with empty A sites. The kinase activity is stimulated upon binding to uncharged tRNAs. In terms of biological role, metabolic-stress sensing protein kinase that phosphorylates the alpha subunit of eukaryotic translation initiation factor 2 (eIF-2-alpha/SUI2) on 'Ser-52' in response to low amino acid, carbon, or purine availability. Required for adapatation to nutrient starvation by acting as a key component of the integrated stress response (ISR), by which cells alter their translational and transcriptional output in response to starvation. Converts phosphorylated eIF-2-alpha/SUI2 either to a competitive inhibitor of translation initiation factor eIF-2B, leading to a global protein synthesis repression, and thus to a reduced overall utilization of amino acids, or to a translational initiation activation of specific mRNAs, such as the transcriptional activator GCN4, and hence allowing GCN4-mediated reprogramming of transcription to alleviate nutrient depletion. Binds uncharged tRNAs. Binds to aminoacylated tRNA(Phe) less tightly than to deacylated tRNA(Phe). Binds to double-stranded RNA. This chain is eIF-2-alpha kinase GCN2, found in Saccharomyces cerevisiae (strain ATCC 204508 / S288c) (Baker's yeast).